Reading from the N-terminus, the 426-residue chain is Ammonium transporter Rh type A (426 aa).

Over 1–4 the chain is Cytoplasmic; the sequence is MRFK. A helical transmembrane segment spans residues 5–25; that stretch reads FPLMAIGLEVVMIVLFALFVQ. The Extracellular segment spans residues 26 to 54; sequence YETSVNTSRNPNETESAAMDVEKTMESYP. 2 N-linked (GlcNAc...) asparagine glycosylation sites follow: asparagine 31 and asparagine 37. A helical membrane pass occupies residues 55 to 75; the sequence is FFQDVHIMVFAGFGFLMTFLW. Residues 76 to 78 are Cytoplasmic-facing; that stretch reads KYG. Residues 79-99 traverse the membrane as a helical segment; that stretch reads FSGVGINLLIAALGLQWGTII. The Extracellular portion of the chain corresponds to 100–124; the sequence is QGIFRSHGQKFLIEMKNMIHADFST. The next 2 membrane-spanning stretches (helical) occupy residues 125–145 and 146–166; these read VTVL…QMLI and MTIL…KILW. The Extracellular segment spans residues 167–170; the sequence is ASDT. A helical transmembrane segment spans residues 171 to 191; the sequence is GESMTIHAFGAYFGLAVAGIL. Residues 192–210 lie on the Cytoplasmic side of the membrane; the sequence is YRSGLKEKHSNEESVYHSD. The helical transmembrane segment at 211-231 threads the bilayer; the sequence is LFAMIGSLFLWIFWPSFNSAT. The Extracellular segment spans residues 232–241; the sequence is ADEAKKQYRA. Residues 242 to 262 form a helical membrane-spanning segment; sequence IVNTYFSLAASVVTAYACSSL. Residues 263 to 270 are Cytoplasmic-facing; it reads LESRGKLN. Residues 271–288 form a helical membrane-spanning segment; sequence MVHIQNATLAGGVAVGTC. Residues 289–292 lie on the Extracellular side of the membrane; it reads ADME. A helical transmembrane segment spans residues 293-313; it reads IPPYYAMIIGSIAGAVSVFGF. The Cytoplasmic portion of the chain corresponds to 314-331; the sequence is KFLTPLFTTKLRIHDTCG. Residues 332-352 form a helical membrane-spanning segment; that stretch reads VHNLHGLPGVIGGLAGIITVA. Over 353 to 371 the chain is Extracellular; sequence LEESDSTKTVSQAAALGSS. The chain crosses the membrane as a helical span at residues 372 to 392; that stretch reads IATALVGGLITGAILKIPFWA. Topologically, residues 393–426 are cytoplasmic; the sequence is QPPDEDCYDDSVYWEVPERKEYDNHFHELLSTLH.

This sequence belongs to the ammonium transporter (TC 2.A.49) family. Rh subfamily. As to quaternary structure, homodimer. Heterotrimer; a RHCE monomer interacts with a RHAG homodimer. Component of the ankyrin-1 complex in the erythrocyte, composed of ANK1, RHCE, RHAG, SLC4A1, EPB42, GYPA, GYPB and AQP1. Interacts with GYPB (via the N-terminal); this interaction bridges the (RHAG)2(RHCE) heterotrimer with the SLC4A1 Band 3 I dimer complexed with GYPA. Post-translationally, glycosylated.

The protein resides in the membrane. The catalysed reaction is methylamine(out) = methylamine(in). The enzyme catalyses NH4(+)(in) = NH4(+)(out). It carries out the reaction CO2(out) = CO2(in). In terms of biological role, component of the ankyrin-1 complex, a multiprotein complex involved in the stability and shape of the erythrocyte membrane. Heterotrimer with RHCE (RHAG)2(RHCE), that transports ammonium and its related derivative methylammonium, in both neutral and ionic forms, across the erythrocyte membrane. The transport of NH4(+) is electrogenic and masks the NH3 transport. Also, may act as a CO2 channel. Moreover in erythrocyte, regulates RHD membrane expression and is associated with rhesus blood group antigen expression. The polypeptide is Ammonium transporter Rh type A (Bos taurus (Bovine)).